We begin with the raw amino-acid sequence, 762 residues long: Protein PHTF1 (762 aa).

Positions 6 to 150 (RDAISWYQKK…VHCQIVSTQI (145 aa)) constitute a PHTF domain. 3 helical membrane passes run 77 to 97 (GLVRVVFFPLFSNWWIQVTSL), 99 to 119 (IFVWLLLLYFMQVIAIVLYLM), and 121 to 141 (PIVNISEVLGPLCLMLLMGTV). The disordered stretch occupies residues 152-184 (RPSGNNGNRRRRKLRKTVNGDGSRENGNNSSDK). Asn-179 and Asn-180 each carry an N-linked (GlcNAc...) asparagine glycan. A phosphoserine mark is found at Ser-272, Ser-276, Ser-277, Ser-334, and Ser-336. Disordered stretches follow at residues 344 to 380 (SAAFSQGSRSGVSGGSRSLNMSRRDSESTRHDSETED) and 393 to 415 (RSSVTSDSEGAHVNTLHSGTKRD). Positions 348–361 (SQGSRSGVSGGSRS) are enriched in low complexity. N-linked (GlcNAc...) asparagine glycosylation occurs at Asn-363. Residues 365 to 376 (SRRDSESTRHDS) show a composition bias toward basic and acidic residues. A glycan (N-linked (GlcNAc...) asparagine) is linked at Asn-431. 4 consecutive transmembrane segments (helical) span residues 473–493 (GVGYQMLGNVVTIGLAFFPFL), 512–532 (EILTLFCGAPPVTPIIVLSII), 611–631 (VVVSSVFLLTLSIAFICCAQV), and 645–665 (WEFLIWETALLLFLLRLASLG). 2 N-linked (GlcNAc...) asparagine glycosylation sites follow: Asn-674 and Asn-733. Residues 737–757 (VVILSAVSGVISDLLGFNIRL) form a helical membrane-spanning segment.

As to quaternary structure, interacts with FEM1B. Widely expressed with highest levels in testis.

Its subcellular location is the endoplasmic reticulum membrane. The protein localises to the golgi apparatus. It is found in the cis-Golgi network membrane. The sequence is that of Protein PHTF1 from Homo sapiens (Human).